A 976-amino-acid polypeptide reads, in one-letter code: Ephrin type-A receptor 1 (976 aa).

Positions 1 to 25 (MERRWPLGLGLVLLLCAPLPPGARA) are cleaved as a signal peptide. Residues 26–547 (KEVTLMDTSK…PVSRGLTGGE (522 aa)) are Extracellular-facing. Residues 27–209 (EVTLMDTSKA…FYQRCPETLN (183 aa)) form the Eph LBD domain. 2 consecutive Fibronectin type-III domains span residues 332–445 (PPSA…MGHA) and 447–538 (SLSG…TSPP). Asn-414 carries N-linked (GlcNAc...) asparagine glycosylation. Residues 548 to 568 (IVAVIFGLLLGAALLLGILVF) traverse the membrane as a helical segment. Topologically, residues 569-976 (RSRRAQRQRQ…ILCSIQGFKD (408 aa)) are cytoplasmic. 2 positions are modified to phosphotyrosine; by autocatalysis: Tyr-599 and Tyr-605. The Protein kinase domain occupies 624–884 (LMVDTVIGEG…KLQAHLEQLL (261 aa)). Residues 630–638 (IGEGEFGEV) and Lys-656 contribute to the ATP site. Asp-749 serves as the catalytic Proton acceptor. Tyr-781 bears the Phosphotyrosine; by autocatalysis mark. A phosphoserine mark is found at Ser-906 and Ser-910. The region spanning 913 to 976 (IPYRTVSEWL…ILCSIQGFKD (64 aa)) is the SAM domain. Tyr-930 carries the phosphotyrosine; by autocatalysis modification. Positions 974–976 (FKD) match the PDZ-binding motif.

Belongs to the protein kinase superfamily. Tyr protein kinase family. Ephrin receptor subfamily. As to quaternary structure, homodimer. Forms a signaling complex with LCK; PTK2B/PYK2 and PI3-kinase upon activation by EFNA1; regulates T-lymphocytes migration. Interacts (via SAM domain) with ILK (via ANK repeats); stimulated by EFNA1 but independent of the kinase activity of EPHA1. Interacts (kinase activity-dependent) with PTK2/FAK1. Phosphorylated. Autophosphorylation is stimulated by its ligand EFNA1. In terms of processing, ubiquitinated. Overexpressed in several carcinomas.

It is found in the cell membrane. It carries out the reaction L-tyrosyl-[protein] + ATP = O-phospho-L-tyrosyl-[protein] + ADP + H(+). Receptor tyrosine kinase which binds promiscuously membrane-bound ephrin-A family ligands residing on adjacent cells, leading to contact-dependent bidirectional signaling into neighboring cells. The signaling pathway downstream of the receptor is referred to as forward signaling while the signaling pathway downstream of the ephrin ligand is referred to as reverse signaling. Binds with a low affinity EFNA3 and EFNA4 and with a high affinity to EFNA1 which most probably constitutes its cognate/functional ligand. Upon activation by EFNA1 induces cell attachment to the extracellular matrix inhibiting cell spreading and motility through regulation of ILK and downstream RHOA and RAC. Also plays a role in angiogenesis and regulates cell proliferation. May play a role in apoptosis. This chain is Ephrin type-A receptor 1 (EPHA1), found in Homo sapiens (Human).